A 744-amino-acid polypeptide reads, in one-letter code: Catalase-peroxidase (744 aa).

A disordered region spans residues 1 to 21; the sequence is MANESKCPFHQTAGGGTSNRD. Residues 91–241 constitute a cross-link (tryptophyl-tyrosyl-methioninium (Trp-Tyr) (with M-267)); that stretch reads WHSAGTYRIG…LAAVQMGLIY (151 aa). His-92 functions as the Proton acceptor in the catalytic mechanism. The segment at residues 241–267 is a cross-link (tryptophyl-tyrosyl-methioninium (Tyr-Met) (with W-91)); it reads YVNPEGPEGNPDPVASGKDIRDTFGRM. His-282 contacts heme b. The interval 361-387 is disordered; the sequence is GAHQWRPKDGKGANTVPDAHDTTKRHA.

The protein belongs to the peroxidase family. Peroxidase/catalase subfamily. In terms of assembly, homodimer or homotetramer. Requires heme b as cofactor. In terms of processing, formation of the three residue Trp-Tyr-Met cross-link is important for the catalase, but not the peroxidase activity of the enzyme.

It carries out the reaction H2O2 + AH2 = A + 2 H2O. The catalysed reaction is 2 H2O2 = O2 + 2 H2O. In terms of biological role, bifunctional enzyme with both catalase and broad-spectrum peroxidase activity. The protein is Catalase-peroxidase of Pseudomonas entomophila (strain L48).